The primary structure comprises 432 residues: Monoacylglycerol lipase ABHD2 (432 aa).

Topologically, residues 1–14 (MNTHESEVYTVAPE) are cytoplasmic. The chain crosses the membrane as a helical; Signal-anchor for type II membrane protein span at residues 15-35 (MPAMFDGMKLAAVATVLYVIV). Topologically, residues 36 to 432 (RCLNLKSPTA…NQTTCQENTS (397 aa)) are extracellular. In terms of domain architecture, AB hydrolase-1 spans 132–383 (TMVICPGIGN…HGGHLGFFEG (252 aa)). N141 is a glycosylation site (N-linked (GlcNAc...) asparagine). Residue S212 is the Nucleophile of the active site. Residue N225 is glycosylated (N-linked (GlcNAc...) asparagine). Catalysis depends on charge relay system residues D346 and H377. The interval 413 to 432 (PPCQSKDAQSNQTTCQENTS) is disordered. Polar residues predominate over residues 418-432 (KDAQSNQTTCQENTS). The N-linked (GlcNAc...) asparagine glycan is linked to N423.

Belongs to the AB hydrolase superfamily. AB hydrolase 4 family.

It localises to the cell membrane. It carries out the reaction Hydrolyzes glycerol monoesters of long-chain fatty acids.. The catalysed reaction is an acetyl ester + H2O = an aliphatic alcohol + acetate + H(+). It catalyses the reaction a triacylglycerol + H2O = a diacylglycerol + a fatty acid + H(+). The enzyme catalyses 2-(5Z,8Z,11Z,14Z-eicosatetraenoyl)-glycerol + H2O = glycerol + (5Z,8Z,11Z,14Z)-eicosatetraenoate + H(+). It carries out the reaction a butanoate ester + H2O = an aliphatic alcohol + butanoate + H(+). The catalysed reaction is hexadecanoate ester + H2O = an aliphatic alcohol + hexadecanoate + H(+). Its activity is regulated as follows. Acylglycerol lipase activity is activated upon binding to progesterone. Its function is as follows. Progesterone-dependent acylglycerol lipase that catalyzes hydrolysis of endocannabinoid arachidonoylglycerol (AG) from cell membrane. Acts as a progesterone receptor: progesterone-binding activates the acylglycerol lipase activity, mediating degradation of 1-arachidonoylglycerol (1AG) and 2-arachidonoylglycerol (2AG) to glycerol and arachidonic acid (AA). Also displays an ester hydrolase activity against acetyl ester, butanoate ester and hexadecanoate ester. Plays a key role in sperm capacitation in response to progesterone by mediating degradation of 2AG, an inhibitor of the sperm calcium channel CatSper, leading to calcium influx via CatSper and sperm activation. May also play a role in smooth muscle cells migration. This is Monoacylglycerol lipase ABHD2 (abhd2a) from Danio rerio (Zebrafish).